Here is a 255-residue protein sequence, read N- to C-terminus: Lipoprotein-releasing system ATP-binding protein LolD 2 (255 aa).

The ABC transporter domain maps to 9–254 (LEARGIRKSY…SDSAKLETVA (246 aa)). An ATP-binding site is contributed by 45–52 (GRSGSGKS).

Belongs to the ABC transporter superfamily. Lipoprotein translocase (TC 3.A.1.125) family. As to quaternary structure, the complex is composed of two ATP-binding proteins (LolD) and two transmembrane proteins (LolC and LolE).

The protein localises to the cell inner membrane. In terms of biological role, part of the ABC transporter complex LolCDE involved in the translocation of mature outer membrane-directed lipoproteins, from the inner membrane to the periplasmic chaperone, LolA. Responsible for the formation of the LolA-lipoprotein complex in an ATP-dependent manner. This Rhodopirellula baltica (strain DSM 10527 / NCIMB 13988 / SH1) protein is Lipoprotein-releasing system ATP-binding protein LolD 2.